We begin with the raw amino-acid sequence, 174 residues long: uncharacterized protein (174 aa).

This is an uncharacterized protein from Archaeoglobus fulgidus (strain ATCC 49558 / DSM 4304 / JCM 9628 / NBRC 100126 / VC-16).